The following is a 205-amino-acid chain: Phosphoenolpyruvate guanylyltransferase (205 aa).

Phosphoenolpyruvate-binding residues include Thr-137, Gly-153, and Ser-156.

Belongs to the CofC family.

The enzyme catalyses phosphoenolpyruvate + GTP + H(+) = enolpyruvoyl-2-diphospho-5'-guanosine + diphosphate. Its pathway is cofactor biosynthesis; coenzyme F420 biosynthesis. Its function is as follows. Guanylyltransferase that catalyzes the activation of phosphoenolpyruvate (PEP) as enolpyruvoyl-2-diphospho-5'-guanosine, via the condensation of PEP with GTP. It is involved in the biosynthesis of coenzyme F420, a hydride carrier cofactor. The protein is Phosphoenolpyruvate guanylyltransferase of Rubrobacter xylanophilus (strain DSM 9941 / JCM 11954 / NBRC 16129 / PRD-1).